Consider the following 125-residue polypeptide: Large ribosomal subunit protein bL12 (125 aa).

Belongs to the bacterial ribosomal protein bL12 family. As to quaternary structure, homodimer. Part of the ribosomal stalk of the 50S ribosomal subunit. Forms a multimeric L10(L12)X complex, where L10 forms an elongated spine to which 2 to 4 L12 dimers bind in a sequential fashion. Binds GTP-bound translation factors.

Its function is as follows. Forms part of the ribosomal stalk which helps the ribosome interact with GTP-bound translation factors. Is thus essential for accurate translation. This Francisella tularensis subsp. holarctica (strain FTNF002-00 / FTA) protein is Large ribosomal subunit protein bL12.